Here is a 627-residue protein sequence, read N- to C-terminus: Spindle assembly abnormal protein 6 homolog (627 aa).

In terms of domain architecture, PISA spans 39 to 91 (VHRKDLVVRLTDDTDLYFLYNLIISEEDFQSLKVQQGLLIDFTSFPQKFIDLL). Positions 153-473 (LASCLSSVKE…SREVLKTNEN (321 aa)) form a coiled coil. Disordered stretches follow at residues 187 to 257 (QTLS…LQTK) and 561 to 586 (EVSPAAFSQPANKENSEPVGLDSKYF). Positions 191–201 (EKSRELDKLRS) are enriched in basic and acidic residues. A compositionally biased stretch (polar residues) spans 202-213 (EWTSQTTSLSSR). Positions 214–226 (HMQDLTAEREKAL) are enriched in basic and acidic residues. A compositionally biased stretch (low complexity) spans 229 to 238 (QSRLQQQNEQ).

As to quaternary structure, nine homodimers form a cartwheel structure with an internal diameter of 23 nM and radial spokes connecting to the microtubule triplets.

The protein resides in the cytoplasm. Its subcellular location is the cytoskeleton. The protein localises to the microtubule organizing center. It is found in the centrosome. Its function is as follows. Central scaffolding component of the centrioles ensuring their 9-fold symmetry. Required for centrosome biogenesis and duplication: required both for mother-centriole-dependent centriole duplication and deuterosome-dependent centriole amplification in multiciliated cells. This is Spindle assembly abnormal protein 6 homolog (sass6) from Danio rerio (Zebrafish).